Consider the following 261-residue polypeptide: Lytic polysaccharide monooxygenase-like protein X325 (261 aa).

The signal sequence occupies residues 1–17 (MQLSALALATLLATANA). The Cu(2+) site is built by His-18, His-64, and Asp-133. Disulfide bonds link Cys-39–Cys-139 and Cys-108–Cys-155. Residues Asn-157 and Asn-183 are each glycosylated (N-linked (GlcNAc...) asparagine). Residues 174–210 (LAENTQGSGNSSGHAHGSSGSGSASASKTDSKSSAAS) form a disordered region. The segment covering 180 to 210 (GSGNSSGHAHGSSGSGSASASKTDSKSSAAS) has biased composition (low complexity). Asn-238 carries the GPI-anchor amidated asparagine lipid modification. Residues 239–261 (SGSLAYVNGALAIGGVVAAALLI) constitute a propeptide, removed in mature form.

This sequence belongs to the X325 family. Cu(2+) is required as a cofactor.

It localises to the cell membrane. Functionally, lytic polysaccharide monooxygenase-like protein that has diverged to biological functions other than polysaccharide degradation since it does not perform oxidative cleavage of polysaccharides. Acts as a cell surface-bound protein that functions in the copper-accumulation pathway. This Yarrowia lipolytica (strain CLIB 122 / E 150) (Yeast) protein is Lytic polysaccharide monooxygenase-like protein X325.